The sequence spans 121 residues: uncharacterized protein (121 aa).

The interval 1-121 (MGQVLSICSS…QQEREQIKWD (121 aa)) is disordered. G2 carries the N-myristoyl glycine lipid modification. C8 carries the S-palmitoyl cysteine lipid modification. Basic and acidic residues-rich tracts occupy residues 11 to 23 (KSKE…EKPT), 73 to 83 (AAEKRNIEKKK), 90 to 105 (RQLE…EHLQ), and 112 to 121 (QQEREQIKWD).

This sequence to yeast YGL108C. Post-translationally, myristoylated. The N-myristoylated protein is further palmitoylated.

It is found in the cytoplasm. The protein resides in the cytosol. This is an uncharacterized protein from Schizosaccharomyces pombe (strain 972 / ATCC 24843) (Fission yeast).